A 75-amino-acid chain; its full sequence is Large ribosomal subunit protein bL28 (75 aa).

The protein belongs to the bacterial ribosomal protein bL28 family.

This is Large ribosomal subunit protein bL28 from Buchnera aphidicola subsp. Acyrthosiphon pisum (strain 5A).